Here is a 434-residue protein sequence, read N- to C-terminus: UDP-N-acetylglucosamine 1-carboxyvinyltransferase 1 (434 aa).

22–23 (KN) is a binding site for phosphoenolpyruvate. Arg93 lines the UDP-N-acetyl-alpha-D-glucosamine pocket. Cys117 functions as the Proton donor in the catalytic mechanism. Cys117 carries the 2-(S-cysteinyl)pyruvic acid O-phosphothioketal modification. UDP-N-acetyl-alpha-D-glucosamine contacts are provided by residues 122–126 (RPIDQ), Asp306, and Val328.

Belongs to the EPSP synthase family. MurA subfamily.

It localises to the cytoplasm. It carries out the reaction phosphoenolpyruvate + UDP-N-acetyl-alpha-D-glucosamine = UDP-N-acetyl-3-O-(1-carboxyvinyl)-alpha-D-glucosamine + phosphate. It participates in cell wall biogenesis; peptidoglycan biosynthesis. In terms of biological role, cell wall formation. Adds enolpyruvyl to UDP-N-acetylglucosamine. The protein is UDP-N-acetylglucosamine 1-carboxyvinyltransferase 1 of Bacillus cereus (strain ATCC 14579 / DSM 31 / CCUG 7414 / JCM 2152 / NBRC 15305 / NCIMB 9373 / NCTC 2599 / NRRL B-3711).